Reading from the N-terminus, the 600-residue chain is Aspartate--tRNA(Asp/Asn) ligase (600 aa).

Glutamate 175 provides a ligand contact to L-aspartate. The segment at 199 to 202 is aspartate; sequence QLFK. L-aspartate is bound at residue arginine 221. Residues 221–223 and glutamine 230 contribute to the ATP site; that span reads RDE. Histidine 453 provides a ligand contact to L-aspartate. Glutamate 487 provides a ligand contact to ATP. L-aspartate is bound at residue arginine 494. 539-542 provides a ligand contact to ATP; that stretch reads GWDR. Residues 564–600 are disordered; the sequence is GGVDPLTDAPAPITPLQRKESGIDAKPKAAENKPEEK. The span at 580–600 shows a compositional bias: basic and acidic residues; sequence QRKESGIDAKPKAAENKPEEK.

This sequence belongs to the class-II aminoacyl-tRNA synthetase family. Type 1 subfamily. In terms of assembly, homodimer.

It localises to the cytoplasm. It carries out the reaction tRNA(Asx) + L-aspartate + ATP = L-aspartyl-tRNA(Asx) + AMP + diphosphate. Functionally, aspartyl-tRNA synthetase with relaxed tRNA specificity since it is able to aspartylate not only its cognate tRNA(Asp) but also tRNA(Asn). Reaction proceeds in two steps: L-aspartate is first activated by ATP to form Asp-AMP and then transferred to the acceptor end of tRNA(Asp/Asn). The polypeptide is Aspartate--tRNA(Asp/Asn) ligase (Corynebacterium efficiens (strain DSM 44549 / YS-314 / AJ 12310 / JCM 11189 / NBRC 100395)).